The sequence spans 100 residues: Small ribosomal subunit protein uS14c (100 aa).

Positions 1-10 (MARKGLIERE) are enriched in basic and acidic residues. Residues 1–29 (MARKGLIEREKKRKKLEQKYHSIRGSSKK) are disordered.

This sequence belongs to the universal ribosomal protein uS14 family. In terms of assembly, part of the 30S ribosomal subunit.

It is found in the plastid. Its subcellular location is the chloroplast. Binds 16S rRNA, required for the assembly of 30S particles. The sequence is that of Small ribosomal subunit protein uS14c from Acorus calamus (Sweet flag).